The chain runs to 338 residues: (-)-alpha-amorphene synthase ((2E,6E)-farnesyl diphosphate cyclizing) (338 aa).

Mg(2+)-binding residues include D105 and E109. Positions 105-109 (DDRAE) match the DDXXE motif motif. Position 196 (R196) interacts with substrate. S246 lines the Mg(2+) pocket. Residue K249 participates in substrate binding. E250 is a Mg(2+) binding site. Residue 327–328 (RY) coordinates substrate.

This sequence belongs to the terpene synthase family. Mg(2+) serves as cofactor.

The enzyme catalyses (2E,6E)-farnesyl diphosphate = (-)-alpha-amorphene + diphosphate. It functions in the pathway secondary metabolite biosynthesis; terpenoid biosynthesis. Catalyzes the conversion of (2E,6E)-farnesyl diphosphate (FPP) to yield the bicyclic sesquiterpene (1R,6S,7S)-(-)-alpha-amorphene via a probable 1,6-cyclization, which could involve the abstraction of the pyrophosphate from FPP to yield a (R)-bisabolyl cation. The only accepted substrate is (2E,6E)-farnesyl diphosphate (FPP). This Streptomyces viridochromogenes (strain DSM 40736 / JCM 4977 / BCRC 1201 / Tue 494) protein is (-)-alpha-amorphene synthase ((2E,6E)-farnesyl diphosphate cyclizing).